The sequence spans 119 residues: Large ribosomal subunit protein bL20 (119 aa).

The protein belongs to the bacterial ribosomal protein bL20 family.

Functionally, binds directly to 23S ribosomal RNA and is necessary for the in vitro assembly process of the 50S ribosomal subunit. It is not involved in the protein synthesizing functions of that subunit. This is Large ribosomal subunit protein bL20 from Clostridium botulinum (strain ATCC 19397 / Type A).